Reading from the N-terminus, the 182-residue chain is Peptidoglycan L,D-endopeptidase MepK (182 aa).

Positions 1 to 30 (MDKFDANRRKLLALGGVALGAAILPTPAFA) form a signal peptide, tat-type signal. Zn(2+)-binding residues include His133, Asp140, and His173.

The protein belongs to the peptidase M15 family. Zn(2+) serves as cofactor. Post-translationally, predicted to be exported by the Tat system. The position of the signal peptide cleavage has not been experimentally proven.

The protein operates within cell wall biogenesis; cell wall polysaccharide biosynthesis. L,D-endopeptidase that cleaves meso-diaminopimelic acid (mDAP)-mDAP cross-links in peptidoglycan. It works in conjunction with other elongation-specific D,D-endopeptidases to make space for efficient incorporation of nascent peptidoglycan strands into the sacculus and thus enable cell wall expansion. The chain is Peptidoglycan L,D-endopeptidase MepK from Escherichia coli O157:H7.